Consider the following 243-residue polypeptide: tRNA (guanine-N(1)-)-methyltransferase (243 aa).

S-adenosyl-L-methionine is bound by residues Gly110 and 130–135 (VGDYVM).

The protein belongs to the RNA methyltransferase TrmD family. In terms of assembly, homodimer.

The protein localises to the cytoplasm. It catalyses the reaction guanosine(37) in tRNA + S-adenosyl-L-methionine = N(1)-methylguanosine(37) in tRNA + S-adenosyl-L-homocysteine + H(+). In terms of biological role, specifically methylates guanosine-37 in various tRNAs. The chain is tRNA (guanine-N(1)-)-methyltransferase from Treponema denticola (strain ATCC 35405 / DSM 14222 / CIP 103919 / JCM 8153 / KCTC 15104).